The primary structure comprises 308 residues: Carbonic anhydrase 6 (308 aa).

The N-terminal stretch at 1-17 is a signal peptide; it reads MRALVLLLSLFLLGGQA. Positions 21 to 278 constitute an Alpha-carbonic anhydrase domain; it reads SDWTYSEGAL…LNHRVVESNF (258 aa). The cysteines at positions 42 and 224 are disulfide-linked. The N-linked (GlcNAc...) asparagine glycan is linked to Asn67. The active-site Proton donor/acceptor is the His85. Residues His111, His113, and His138 each contribute to the Zn(2+) site. 220-221 is a substrate binding site; it reads TT. Asn256 carries N-linked (GlcNAc...) asparagine glycosylation.

Belongs to the alpha-carbonic anhydrase family. Requires Zn(2+) as cofactor. In terms of tissue distribution, major constituent of saliva.

The protein resides in the secreted. The enzyme catalyses hydrogencarbonate + H(+) = CO2 + H2O. Inhibited by coumarins, sulfonamide derivatives such as acetazolamide (AZA), saccharin and Foscarnet (phosphonoformate trisodium salt). In terms of biological role, reversible hydration of carbon dioxide. Its role in saliva is unknown. This Homo sapiens (Human) protein is Carbonic anhydrase 6 (CA6).